The sequence spans 141 residues: Hemoglobin subunit alpha-A (141 aa).

The region spanning 1 to 141 is the Globin domain; the sequence is VLSAADKNNV…VGNVLTAKYR (141 aa). An O2-binding site is contributed by His-58. His-87 provides a ligand contact to heme b.

Belongs to the globin family. In terms of assembly, heterotetramer of two alpha chains and two beta chains. In terms of tissue distribution, red blood cells.

In terms of biological role, involved in oxygen transport from the lung to the various peripheral tissues. This Francolinus pondicerianus (Grey francolin) protein is Hemoglobin subunit alpha-A (HBAA).